The primary structure comprises 29 residues: Galanin (29 aa).

At Ala29 the chain carries Alanine amide.

This sequence belongs to the galanin family.

The protein resides in the secreted. Functionally, contracts smooth muscle of the gastrointestinal and genitourinary tract, regulates growth hormone release, modulates insulin release, and may be involved in the control of adrenal secretion. This Amia calva (Bowfin) protein is Galanin (gal).